Reading from the N-terminus, the 536-residue chain is Phosphoenolpyruvate carboxykinase (ATP) (536 aa).

Residues R61, Y195, and K201 each coordinate substrate. ATP is bound by residues K201, H220, and 236 to 244 (GLSGTGKTT). Mn(2+) is bound by residues K201 and H220. D257 contributes to the Mn(2+) binding site. Residues E285, R322, and T447 each coordinate ATP. R322 lines the substrate pocket.

It belongs to the phosphoenolpyruvate carboxykinase (ATP) family. Mn(2+) is required as a cofactor.

The protein localises to the cytoplasm. The enzyme catalyses oxaloacetate + ATP = phosphoenolpyruvate + ADP + CO2. Its pathway is carbohydrate biosynthesis; gluconeogenesis. Its function is as follows. Involved in the gluconeogenesis. Catalyzes the conversion of oxaloacetate (OAA) to phosphoenolpyruvate (PEP) through direct phosphoryl transfer between the nucleoside triphosphate and OAA. The sequence is that of Phosphoenolpyruvate carboxykinase (ATP) from Brucella melitensis biotype 1 (strain ATCC 23456 / CCUG 17765 / NCTC 10094 / 16M).